A 416-amino-acid polypeptide reads, in one-letter code: Glutamyl-tRNA reductase (416 aa).

Substrate-binding positions include 49 to 52 (TCNR), S105, 110 to 112 (EPQ), and Q116. C50 (nucleophile) is an active-site residue. 185-190 (GAGETI) provides a ligand contact to NADP(+).

This sequence belongs to the glutamyl-tRNA reductase family. Homodimer.

The catalysed reaction is (S)-4-amino-5-oxopentanoate + tRNA(Glu) + NADP(+) = L-glutamyl-tRNA(Glu) + NADPH + H(+). It functions in the pathway porphyrin-containing compound metabolism; protoporphyrin-IX biosynthesis; 5-aminolevulinate from L-glutamyl-tRNA(Glu): step 1/2. Functionally, catalyzes the NADPH-dependent reduction of glutamyl-tRNA(Glu) to glutamate 1-semialdehyde (GSA). The sequence is that of Glutamyl-tRNA reductase from Shewanella amazonensis (strain ATCC BAA-1098 / SB2B).